A 425-amino-acid chain; its full sequence is DNA-directed RNA polymerase I subunit rpa49 (425 aa).

The disordered stretch occupies residues 1–26; that stretch reads MAGDELKGKKRKYRDSHSGDEKSVKI. Over residues 15–24 the composition is skewed to basic and acidic residues; the sequence is DSHSGDEKSV.

The protein belongs to the eukaryotic RPA49/POLR1E RNA polymerase subunit family. In terms of assembly, component of the RNA polymerase I (Pol I) complex consisting of 14 subunits.

The protein resides in the nucleus. It localises to the nucleolus. DNA-dependent RNA polymerase catalyzes the transcription of DNA into RNA using the four ribonucleoside triphosphates as substrates. Component of RNA polymerase I which synthesizes ribosomal RNA precursors. This Schizosaccharomyces pombe (strain 972 / ATCC 24843) (Fission yeast) protein is DNA-directed RNA polymerase I subunit rpa49 (rpa49).